We begin with the raw amino-acid sequence, 270 residues long: Methylthioribulose-1-phosphate dehydratase (270 aa).

Cys-122 provides a ligand contact to substrate. Zn(2+) contacts are provided by His-140 and His-142. Glu-165 serves as the catalytic Proton donor/acceptor. His-230 lines the Zn(2+) pocket.

Belongs to the aldolase class II family. MtnB subfamily. It depends on Zn(2+) as a cofactor.

The protein resides in the cytoplasm. It carries out the reaction 5-(methylsulfanyl)-D-ribulose 1-phosphate = 5-methylsulfanyl-2,3-dioxopentyl phosphate + H2O. The protein operates within amino-acid biosynthesis; L-methionine biosynthesis via salvage pathway; L-methionine from S-methyl-5-thio-alpha-D-ribose 1-phosphate: step 2/6. Functionally, catalyzes the dehydration of methylthioribulose-1-phosphate (MTRu-1-P) into 2,3-diketo-5-methylthiopentyl-1-phosphate (DK-MTP-1-P). The polypeptide is Methylthioribulose-1-phosphate dehydratase (Candida albicans (strain WO-1) (Yeast)).